Reading from the N-terminus, the 287-residue chain is Probable 3-hydroxybutyryl-CoA dehydrogenase (287 aa).

Belongs to the 3-hydroxyacyl-CoA dehydrogenase family.

It catalyses the reaction (3S)-3-hydroxybutanoyl-CoA + NADP(+) = acetoacetyl-CoA + NADPH + H(+). The protein operates within lipid metabolism; butanoate metabolism. This chain is Probable 3-hydroxybutyryl-CoA dehydrogenase (mmgB), found in Bacillus subtilis (strain 168).